The following is a 360-amino-acid chain: Mannose-1-phosphate guanylyltransferase catalytic subunit beta (360 aa).

The segment at 2–222 (KALILVGGYG…QGFWMDIGQP (221 aa)) is substrate-binding domain. Residue D110 coordinates GDP-alpha-D-mannose. Position 110 (D110) interacts with Mg(2+). K162 is a catalytic residue. D218 lines the GDP-alpha-D-mannose pocket. D218 contributes to the Mg(2+) binding site. A hexapeptide repeat domain region spans residues 245–360 (HVGPGFIGNV…ESVPEPRIIM (116 aa)).

It belongs to the transferase hexapeptide repeat family. In terms of assembly, component of the GMPPA-GMPPB mannose-1-phosphate guanylyltransferase complex composed of 4 gmppa subunits and 8 gmppb subunits; the complex is organized into three layers, a central layer made up of 2 gmppa dimers sandwiched between two layers each made up of 2 gmppb dimers. Catalytic activity of gmppb is reduced when part of the complex and binding of GDP-alpha-D-Mannose by gmppa induces allosteric feedback inhibition of gmppb. Requires Mg(2+) as cofactor.

The catalysed reaction is alpha-D-mannose 1-phosphate + GTP + H(+) = GDP-alpha-D-mannose + diphosphate. It functions in the pathway nucleotide-sugar biosynthesis; GDP-alpha-D-mannose biosynthesis; GDP-alpha-D-mannose from alpha-D-mannose 1-phosphate (GTP route): step 1/1. Enzyme activity is reduced by incorporation into the GMPPA-GMPPB mannose-1-phosphate guanylyltransferase complex. Allosterically inhibited, when part of the GMPPA-GMPPB complex, by GDP-alpha-D-mannose binding to GMPPA. Its function is as follows. Catalytic subunit of the GMPPA-GMPPB mannose-1-phosphate guanylyltransferase complex. Catalyzes the formation of GDP-mannose, an essential precursor of glycan moieties of glycoproteins and glycolipids. Can catalyze the reverse reaction in vitro. Together with GMPPA regulates GDP-alpha-D-mannose levels. The polypeptide is Mannose-1-phosphate guanylyltransferase catalytic subunit beta (gmppb) (Xenopus tropicalis (Western clawed frog)).